The primary structure comprises 477 residues: Mitochondrial adenyl nucleotide antiporter SLC25A24 (477 aa).

The tract at residues methionine 1–aspartate 173 is regulatory N-terminal domain. The Mitochondrial intermembrane portion of the chain corresponds to methionine 1 to glutamine 197. EF-hand domains are found at residues glutamate 19–proline 54, leucine 55–glutamate 88, aspartate 86–threonine 121, and isoleucine 122–threonine 157. Residues aspartate 32, asparagine 34, aspartate 36, valine 38, glutamate 43, aspartate 68, asparagine 70, aspartate 72, lysine 74, glutamate 79, aspartate 99, asparagine 101, aspartate 103, lysine 105, glutamate 110, aspartate 135, aspartate 137, threonine 139, threonine 141, and glutamate 146 each contribute to the Ca(2+) site. The segment at isoleucine 159–histidine 168 is linker region. The C-terminal transmembrane transporter domain stretch occupies residues isoleucine 174–lysine 477. Solcar repeat units follow at residues glycine 192 to leucine 278, isoleucine 286 to tyrosine 371, and proline 383 to threonine 471. The chain crosses the membrane as a helical span at residues leucine 198 to leucine 215. Topologically, residues aspartate 216 to arginine 252 are mitochondrial matrix. A helical membrane pass occupies residues glycine 253–tyrosine 272. The Mitochondrial intermembrane segment spans residues glutamate 273–glycine 295. Residues serine 296–methionine 309 traverse the membrane as a helical segment. At glutamate 310–lysine 345 the chain is on the mitochondrial matrix side. Position 320 is an N6-acetyllysine; alternate (lysine 320). Lysine 320 is subject to N6-succinyllysine; alternate. The residue at position 336 (lysine 336) is an N6-acetyllysine. Residues glycine 346–tyrosine 365 form a helical membrane-spanning segment. Residues glutamate 366 to leucine 388 lie on the Mitochondrial intermembrane side of the membrane. The chain crosses the membrane as a helical span at residues leucine 389 to leucine 406. Residues alanine 407–arginine 445 lie on the Mitochondrial matrix side of the membrane. At lysine 437 the chain carries N6-acetyllysine; alternate. Lysine 437 carries the post-translational modification N6-succinyllysine; alternate. Residues glycine 446 to tyrosine 465 traverse the membrane as a helical segment. Residues glutamate 466–lysine 477 are Mitochondrial intermembrane-facing.

The protein belongs to the mitochondrial carrier (TC 2.A.29) family. In terms of assembly, monomer. In terms of tissue distribution, expressed in all tissues tested. Highly expressed in testis, expressed at intermediate level in small intestine and pancreas, and weakly expressed in kidney, spleen, liver, skeletal muscle and heart.

The protein resides in the mitochondrion inner membrane. It catalyses the reaction Mg(2+)(out) + phosphate(in) + ATP(out) = Mg(2+)(in) + phosphate(out) + ATP(in). It carries out the reaction ADP(out) + phosphate(in) + H(+)(out) = ADP(in) + phosphate(out) + H(+)(in). The enzyme catalyses AMP(out) + phosphate(in) = AMP(in) + phosphate(out). The catalysed reaction is phosphate(in) + ATP(out) + 2 H(+)(out) = phosphate(out) + ATP(in) + 2 H(+)(in). It catalyses the reaction dADP(in) + ADP(out) = dADP(out) + ADP(in). It carries out the reaction Mg(2+)(in) + ADP(out) + ATP(in) + H(+)(out) = Mg(2+)(out) + ADP(in) + ATP(out) + H(+)(in). The enzyme catalyses ADP(out) + diphosphate(in) = ADP(in) + diphosphate(out). The catalysed reaction is dAMP(in) + ADP(out) + H(+)(out) = dAMP(out) + ADP(in) + H(+)(in). It catalyses the reaction 3'-AMP(in) + ADP(out) + H(+)(out) = 3'-AMP(out) + ADP(in) + H(+)(in). It carries out the reaction dAMP(out) + phosphate(in) = dAMP(in) + phosphate(out). The enzyme catalyses 3'-AMP(out) + phosphate(in) = 3'-AMP(in) + phosphate(out). The catalysed reaction is dADP(out) + phosphate(in) + H(+)(out) = dADP(in) + phosphate(out) + H(+)(in). Activated by an increase in cytosolic calcium levels that induce a conformational change of the N-terminal regulatory domain, uncapping the channel and allowing transport. Inhibited by bathophenanthroline, mersalyl, p-hydroxymercuribenzoate, bromcresol purple and tannic acid. Functionally, electroneutral antiporter that mediates the transport of adenyl nucleotides through the inner mitochondrial membrane. Originally identified as an ATP-magnesium/inorganic phosphate antiporter, it also acts as a broad specificity adenyl nucleotide antiporter. By regulating the mitochondrial matrix adenyl nucleotide pool could adapt to changing cellular energetic demands and indirectly regulate adenyl nucleotide-dependent metabolic pathways. In vitro, a low activity is also observed with guanyl and pyrimidine nucleotides. May play a role in protecting cells against oxidative stress-induced cell death, by buffering calcium levels in the mitochondrial matrix through the formation of calcium-phosphate precipitates. This chain is Mitochondrial adenyl nucleotide antiporter SLC25A24, found in Homo sapiens (Human).